The primary structure comprises 483 residues: Probable cobyric acid synthase (483 aa).

The GATase cobBQ-type domain maps to 247-433 (ELHIQIIKLP…LHGIFHNFAF (187 aa)). Cys325 serves as the catalytic Nucleophile. Residue His425 is part of the active site.

Belongs to the CobB/CobQ family. CobQ subfamily.

Its pathway is cofactor biosynthesis; adenosylcobalamin biosynthesis. Functionally, catalyzes amidations at positions B, D, E, and G on adenosylcobyrinic A,C-diamide. NH(2) groups are provided by glutamine, and one molecule of ATP is hydrogenolyzed for each amidation. The sequence is that of Probable cobyric acid synthase from Thermococcus gammatolerans (strain DSM 15229 / JCM 11827 / EJ3).